Here is an 84-residue protein sequence, read N- to C-terminus: Defensin-like protein 116 (84 aa).

The first 24 residues, 1-24, serve as a signal peptide directing secretion; that stretch reads MAITKNMLVVLLLTIIFVTSSVHC. Cystine bridges form between Cys-40–Cys-80, Cys-46–Cys-71, Cys-55–Cys-78, and Cys-59–Cys-79.

It belongs to the DEFL family.

The protein resides in the secreted. This is Defensin-like protein 116 from Arabidopsis thaliana (Mouse-ear cress).